The following is a 290-amino-acid chain: Shikimate dehydrogenase (NADP(+)) (290 aa).

Shikimate-binding positions include 19–21 and Ser65; that span reads SLS. Lys69 serves as the catalytic Proton acceptor. Residues Asn90 and Asp105 each contribute to the shikimate site. NADP(+)-binding positions include 129 to 133 and Leu231; that span reads GAGGA. Position 233 (Tyr233) interacts with shikimate. Position 254 (Gly254) interacts with NADP(+).

The protein belongs to the shikimate dehydrogenase family. In terms of assembly, homodimer.

It catalyses the reaction shikimate + NADP(+) = 3-dehydroshikimate + NADPH + H(+). Its pathway is metabolic intermediate biosynthesis; chorismate biosynthesis; chorismate from D-erythrose 4-phosphate and phosphoenolpyruvate: step 4/7. Involved in the biosynthesis of the chorismate, which leads to the biosynthesis of aromatic amino acids. Catalyzes the reversible NADPH linked reduction of 3-dehydroshikimate (DHSA) to yield shikimate (SA). This is Shikimate dehydrogenase (NADP(+)) from Latilactobacillus sakei subsp. sakei (strain 23K) (Lactobacillus sakei subsp. sakei).